The sequence spans 144 residues: Putative sugar phosphate isomerase RC0402 (144 aa).

H12 lines the substrate pocket. H101 serves as the catalytic Proton donor. Position 135 (R135) interacts with substrate.

The protein belongs to the LacAB/RpiB family.

This chain is Putative sugar phosphate isomerase RC0402, found in Rickettsia conorii (strain ATCC VR-613 / Malish 7).